Consider the following 342-residue polypeptide: N-acetyl-gamma-glutamyl-phosphate reductase (342 aa).

The active site involves cysteine 149.

The protein belongs to the NAGSA dehydrogenase family. Type 1 subfamily.

It is found in the cytoplasm. It carries out the reaction N-acetyl-L-glutamate 5-semialdehyde + phosphate + NADP(+) = N-acetyl-L-glutamyl 5-phosphate + NADPH + H(+). Its pathway is amino-acid biosynthesis; L-arginine biosynthesis; N(2)-acetyl-L-ornithine from L-glutamate: step 3/4. Functionally, catalyzes the NADPH-dependent reduction of N-acetyl-5-glutamyl phosphate to yield N-acetyl-L-glutamate 5-semialdehyde. The polypeptide is N-acetyl-gamma-glutamyl-phosphate reductase (Rhodobacter capsulatus (strain ATCC BAA-309 / NBRC 16581 / SB1003)).